The sequence spans 270 residues: Tetraspanin-14 (270 aa).

At 1–17 (MHYYRYSNAKVSCWYKY) the chain is on the cytoplasmic side. A helical transmembrane segment spans residues 18–38 (LLFSYNIIFWLAGVVFLGVGL). Residues 39-61 (WAWSEKGVLSDLTKVTRMHGIDP) lie on the Extracellular side of the membrane. The helical transmembrane segment at 62 to 82 (VVLVLMVGVVMFTLGFAGCVG) threads the bilayer. The Cytoplasmic portion of the chain corresponds to 83-92 (ALRENICLLN). Residues 93–113 (FFCGTIVLIFFLELAVAVLAF) traverse the membrane as a helical segment. The Extracellular segment spans residues 114–232 (LFQDWVRDRF…QALESWLPRN (119 aa)). The necessary and sufficient for interaction with ADAM10 stretch occupies residues 114-232 (LFQDWVRDRF…QALESWLPRN (119 aa)). Disulfide bonds link Cys-153/Cys-221, Cys-154/Cys-186, Cys-170/Cys-180, and Cys-187/Cys-200. Asn-169 is a glycosylation site (N-linked (GlcNAc...) asparagine). Residues 233–253 (IYIVAGVFIAISLLQIFGIFL) form a helical membrane-spanning segment. The Cytoplasmic segment spans residues 254 to 270 (ARTLISDIEAVKAGHHF).

It belongs to the tetraspanin (TM4SF) family. In terms of assembly, interacts with ADAM10; the interaction promotes ADAM10 maturation and cell surface expression.

Its subcellular location is the cell membrane. Part of TspanC8 subgroup, composed of 6 members that interact with the transmembrane metalloprotease ADAM10. This interaction is required for ADAM10 exit from the endoplasmic reticulum and for enzymatic maturation and trafficking to the cell surface as well as substrate specificity. Different TspanC8/ADAM10 complexes have distinct substrates. Negatively regulates ADAM10-mediated cleavage of GP6. Promotes ADAM10-mediated cleavage of CDH5. This Homo sapiens (Human) protein is Tetraspanin-14.